A 276-amino-acid chain; its full sequence is Radial spoke head protein 9 homolog (276 aa).

Belongs to the flagellar radial spoke RSP9 family. In terms of assembly, component of the axonemal radial spoke 1 (RS1) and 2 (RS2) complexes, at least composed of spoke head proteins RSPH1, RSPH3, RSPH9 and the cilia-specific component RSPH4A or sperm-specific component RSPH6A, spoke stalk proteins RSPH14, DNAJB13, DYDC1, ROPN1L and NME5, and the RS1 complex-specific anchor protein IQUB. Interacts with IQUB. Interacts with RSPH3B. Interacts with RSPH4A. Interacts with RSPH6A. Interacts with CFAP61. Interacts with LRRC23.

The protein resides in the cytoplasm. It localises to the cytoskeleton. Its subcellular location is the cilium axoneme. It is found in the flagellum axoneme. The protein localises to the cell projection. The protein resides in the kinocilium. Its function is as follows. Functions as part of axonemal radial spoke complexes that play an important part in the motility of sperm and cilia. Essential for both the radial spoke head assembly and the central pair microtubule stability in ependymal motile cilia. Required for motility of olfactory and neural cilia and for the structural integrity of ciliary axonemes in both 9+0 and 9+2 motile cilia. The polypeptide is Radial spoke head protein 9 homolog (RSPH9) (Homo sapiens (Human)).